A 392-amino-acid polypeptide reads, in one-letter code: Chalcone synthase-like protein 1 (392 aa).

Cys166 is an active-site residue.

It belongs to the thiolase-like superfamily. Chalcone/stilbene synthases family. Expressed at the same level in leaves and in glandular trichomes.

It localises to the cytoplasm. Its function is as follows. Chalcone synthase that may use malonyl-CoA and hexanoyl-CoA as substrates but without producing olivetol or olivetolic acid. The polypeptide is Chalcone synthase-like protein 1 (CAN383) (Cannabis sativa (Hemp)).